A 354-amino-acid polypeptide reads, in one-letter code: NADH-quinone oxidoreductase subunit H (354 aa).

Transmembrane regions (helical) follow at residues 23–43 (LVRAVCIILPLLLCVAYLILW), 91–111 (YIIAPLMVLMPAVAIWAVIPF), 124–144 (LLYVMAISSVGVYGVILAGWA), 162–182 (ISYEIAMGFALVTVLMVTGSL), 203–223 (ILSWNWLPLLPMFGVYFISGV), 250–270 (GMAFALFFLAEYINMIVISAL), 291–311 (IPGFFWLLIKVFLLLSVFIWL), and 330–350 (IFIPLTVGWLVVVAIWLVSPW).

The protein belongs to the complex I subunit 1 family. As to quaternary structure, NDH-1 is composed of 14 different subunits. Subunits NuoA, H, J, K, L, M, N constitute the membrane sector of the complex.

It localises to the cell inner membrane. The enzyme catalyses a quinone + NADH + 5 H(+)(in) = a quinol + NAD(+) + 4 H(+)(out). Functionally, NDH-1 shuttles electrons from NADH, via FMN and iron-sulfur (Fe-S) centers, to quinones in the respiratory chain. The immediate electron acceptor for the enzyme in this species is believed to be ubiquinone. Couples the redox reaction to proton translocation (for every two electrons transferred, four hydrogen ions are translocated across the cytoplasmic membrane), and thus conserves the redox energy in a proton gradient. This subunit may bind ubiquinone. The sequence is that of NADH-quinone oxidoreductase subunit H from Ralstonia pickettii (strain 12J).